The following is a 136-amino-acid chain: Mitochondrial pyruvate carrier 1-like protein (136 aa).

At 2 to 19 the chain is on the mitochondrial matrix side; it reads ARMAVLWRKMRDNFQSKE. Residues 20 to 42 traverse the membrane as a helical segment; sequence FREYVSSTHFWGPAFSWGLPLAA. Residues 43 to 51 lie on the Mother cell cytoplasmic side of the membrane; that stretch reads FKDMKASPE. A helical membrane pass occupies residues 52–74; sequence IISGRMTTALILYSAIFMRFAYR. Residues 75–136 lie on the Mitochondrial matrix side of the membrane; it reads VQPRNLLLMA…PGSQPPKQAS (62 aa). The interval 111–136 is disordered; the sequence is EAKARDPPATAAAATSPGSQPPKQAS. The span at 117–136 shows a compositional bias: low complexity; it reads PPATAAAATSPGSQPPKQAS.

This sequence belongs to the mitochondrial pyruvate carrier (MPC) (TC 2.A.105) family.

It is found in the mitochondrion inner membrane. The enzyme catalyses pyruvate(out) + H(+)(out) = pyruvate(in) + H(+)(in). Functionally, mediates the uptake of pyruvate into mitochondria. The chain is Mitochondrial pyruvate carrier 1-like protein (MPC1L) from Homo sapiens (Human).